The primary structure comprises 391 residues: Transmembrane protein 79 (391 aa).

A disordered region spans residues 1-114; sequence MTEPETLALL…TKSEEPFKED (114 aa). The Cytoplasmic portion of the chain corresponds to 1–200; that stretch reads MTEPETLALL…GREALRAVAS (200 aa). Over residues 103–114 the composition is skewed to basic and acidic residues; the sequence is APTKSEEPFKED. The helical transmembrane segment at 201-221 threads the bilayer; that stretch reads VVAALIFFPCLLYGAYAFLPF. Over 222-240 the chain is Extracellular; it reads DAPRLPTMSSRLVYTLRCG. Residues 241–261 form a helical membrane-spanning segment; that stretch reads VFATFPIVLGLLVYGLSLLCF. The Cytoplasmic segment spans residues 262–279; sequence SALRPFGEPRREVEIHRQ. A helical membrane pass occupies residues 280 to 300; sequence YVAQSVQLFILYFFNLAVLST. The Extracellular segment spans residues 301-309; sequence YLPQDTLKL. The chain crosses the membrane as a helical span at residues 310–330; that stretch reads LPLLTGLFAISRLIYWLTFAV. Over 331–339 the chain is Cytoplasmic; the sequence is GRSFRGFGY. The chain crosses the membrane as a helical span at residues 340–360; the sequence is GLTFLPLLAMLVWNLYYMFVV. Over 361–391 the chain is Extracellular; that stretch reads EPERMLTASESRLDYPDHARSVSDYRPRSWG.

In terms of tissue distribution, expressed in the epidermis of the skin. Expressed in epithelial cells of the outermost layer of the stratum granulosum (SG) and in hair follicles (at protein level).

The protein resides in the lysosome. The protein localises to the golgi apparatus. It localises to the trans-Golgi network. Its subcellular location is the membrane. In terms of biological role, contributes to the epidermal integrity and skin barrier function. Plays a role in the lamellar granule (LG) secretory system and in the stratum corneum (SC) epithelial cell formation. This Mus musculus (Mouse) protein is Transmembrane protein 79 (Tmem79).